Consider the following 308-residue polypeptide: UPF0282 protein PYRAB09800 (308 aa).

The protein belongs to the UPF0282 family.

The sequence is that of UPF0282 protein PYRAB09800 from Pyrococcus abyssi (strain GE5 / Orsay).